The following is a 153-amino-acid chain: ORM1-like protein 3 (153 aa).

Residues 1 to 17 (MNVGTAHSEVNPNTRVM) form an important for ceramide level-sensing region. Topologically, residues 1 to 21 (MNVGTAHSEVNPNTRVMNSRG) are cytoplasmic. 2 helical membrane passes run 22-42 (IWLS…SIPF) and 43-63 (VSVP…MYIF). The Cytoplasmic portion of the chain corresponds to 64-94 (LHTVKGTPFETPDQGKARLLTHWEQMDYGVQ). The helical transmembrane segment at 95 to 117 (FTASRKFLTITPIVLYFLTSFYT) threads the bilayer. At 118-121 (KYDQ) the chain is on the extracellular side. Residues 122-142 (VHFILNTVSLMSVLIPKLPQL) traverse the membrane as a helical segment. Hydroxyproline is present on Pro-137. Over 143 to 153 (HGVRIFGINKY) the chain is Cytoplasmic.

The protein belongs to the ORM family. Ceramide-sensitive subunit of the serine palmitoyltransferase (SPT) complex, which is also composed of SPTLC1, SPTLC2/3 and SPTSSA/B. When hydroxylated at Pro-137, ubiquitinated via 'Lys-48'-linkage, leading to proteasomal degradation. In endothelial cells, ORMDL3 proteasomal degradation is controlled by the sphingosine 1-phosphate receptor signaling pathway.

Its subcellular location is the endoplasmic reticulum membrane. Its function is as follows. Plays an essential role in the homeostatic regulation of sphingolipid de novo biosynthesis by modulating the activity of the serine palmitoyltransferase (SPT) in response to ceramide levels. When complexed to SPT, the binding of ceramides to its N-terminus stabilizes a conformation that block SPT substrate entry, hence preventing SPT catalytic activity. Through this mechanism, maintains ceramide levels at sufficient concentrations for the production of complex sphingolipids, but which prevents the accumulation of ceramides to levels that trigger apoptosis. This is ORM1-like protein 3 (Ormdl3) from Rattus norvegicus (Rat).